The chain runs to 419 residues: Serine hydroxymethyltransferase (419 aa).

(6S)-5,6,7,8-tetrahydrofolate-binding positions include L121 and 125-127 (GHL). An N6-(pyridoxal phosphate)lysine modification is found at K229. A (6S)-5,6,7,8-tetrahydrofolate-binding site is contributed by 354-356 (SPF).

The protein belongs to the SHMT family. Homodimer. Pyridoxal 5'-phosphate serves as cofactor.

Its subcellular location is the cytoplasm. The enzyme catalyses (6R)-5,10-methylene-5,6,7,8-tetrahydrofolate + glycine + H2O = (6S)-5,6,7,8-tetrahydrofolate + L-serine. It functions in the pathway one-carbon metabolism; tetrahydrofolate interconversion. The protein operates within amino-acid biosynthesis; glycine biosynthesis; glycine from L-serine: step 1/1. In terms of biological role, catalyzes the reversible interconversion of serine and glycine with tetrahydrofolate (THF) serving as the one-carbon carrier. This reaction serves as the major source of one-carbon groups required for the biosynthesis of purines, thymidylate, methionine, and other important biomolecules. Also exhibits THF-independent aldolase activity toward beta-hydroxyamino acids, producing glycine and aldehydes, via a retro-aldol mechanism. The polypeptide is Serine hydroxymethyltransferase (Coxiella burnetii (strain CbuG_Q212) (Coxiella burnetii (strain Q212))).